The chain runs to 102 residues: Small ribosomal subunit protein uS10 (102 aa).

Belongs to the universal ribosomal protein uS10 family. As to quaternary structure, part of the 30S ribosomal subunit.

Involved in the binding of tRNA to the ribosomes. This Brucella abortus (strain S19) protein is Small ribosomal subunit protein uS10.